A 152-amino-acid chain; its full sequence is 2-C-methyl-D-erythritol 2,4-cyclodiphosphate synthase (152 aa).

A divalent metal cation contacts are provided by Asp8 and His10. Residues Asp8 to His10 and His34 to Ser35 each bind 4-CDP-2-C-methyl-D-erythritol 2-phosphate. An a divalent metal cation-binding site is contributed by His42. Residues Asp56 to Gly58, Phe61 to Asp65, Leu100 to Gly106, and Phe131 to Glu135 contribute to the 4-CDP-2-C-methyl-D-erythritol 2-phosphate site.

Belongs to the IspF family. In terms of assembly, homotrimer. A divalent metal cation serves as cofactor.

The catalysed reaction is 4-CDP-2-C-methyl-D-erythritol 2-phosphate = 2-C-methyl-D-erythritol 2,4-cyclic diphosphate + CMP. It participates in isoprenoid biosynthesis; isopentenyl diphosphate biosynthesis via DXP pathway; isopentenyl diphosphate from 1-deoxy-D-xylulose 5-phosphate: step 4/6. In terms of biological role, involved in the biosynthesis of isopentenyl diphosphate (IPP) and dimethylallyl diphosphate (DMAPP), two major building blocks of isoprenoid compounds. Catalyzes the conversion of 4-diphosphocytidyl-2-C-methyl-D-erythritol 2-phosphate (CDP-ME2P) to 2-C-methyl-D-erythritol 2,4-cyclodiphosphate (ME-CPP) with a corresponding release of cytidine 5-monophosphate (CMP). In Thermus thermophilus (strain ATCC 27634 / DSM 579 / HB8), this protein is 2-C-methyl-D-erythritol 2,4-cyclodiphosphate synthase.